The following is a 332-amino-acid chain: Myogenic-determination protein (332 aa).

Residues 22 to 54 (HNGYGQPTHPGYGFSAYSQQNPIAHPGQNPHQT) form a disordered region. In terms of domain architecture, bHLH spans 161–212 (DRRKAATMRERRRLRKVNEAFEILKRRTSSNPNQRLPKVEILRNAIEYIESL). Polar residues predominate over residues 293 to 309 (TTSPIQNKATPSASDTQ). Residues 293-332 (TTSPIQNKATPSASDTQSPPSSGATAPTSLHVNFKRKCST) are disordered. Residues 310–321 (SPPSSGATAPTS) are compositionally biased toward low complexity.

Efficient DNA binding requires dimerization with another bHLH protein.

The protein localises to the nucleus. In terms of biological role, may play an important role in the early development of muscle. In Drosophila melanogaster (Fruit fly), this protein is Myogenic-determination protein (nau).